Reading from the N-terminus, the 147-residue chain is Large ribosomal subunit protein bL9 (147 aa).

This sequence belongs to the bacterial ribosomal protein bL9 family.

Its function is as follows. Binds to the 23S rRNA. In Bacteroides fragilis (strain YCH46), this protein is Large ribosomal subunit protein bL9.